A 634-amino-acid polypeptide reads, in one-letter code: DNA mismatch repair protein MutL (634 aa).

A disordered region spans residues 406 to 427 (HTHHNDTKGSVHTKSFSARSSS).

Belongs to the DNA mismatch repair MutL/HexB family.

Functionally, this protein is involved in the repair of mismatches in DNA. It is required for dam-dependent methyl-directed DNA mismatch repair. May act as a 'molecular matchmaker', a protein that promotes the formation of a stable complex between two or more DNA-binding proteins in an ATP-dependent manner without itself being part of a final effector complex. This chain is DNA mismatch repair protein MutL, found in Anaplasma phagocytophilum (strain HZ).